A 461-amino-acid chain; its full sequence is Early growth response factor homolog 1 (461 aa).

Disordered regions lie at residues 1-25 (MALHEPPSKLNRHSHSNLLKPPSLN), 96-152 (TLMP…ELTL), and 232-308 (DVLH…YSSL). Composition is skewed to polar residues over residues 96–105 (TLMPAPSSSY), 129–144 (GSNSFGVPRMTNGNSK), 249–265 (LGSSLQNEHPQSNSRPS), and 272–291 (QRTNTSASLTRSMDHSSMSP). The segment covering 299–308 (YSNSASYSSL) has biased composition (low complexity). 3 C2H2-type zinc fingers span residues 374 to 398 (YKCPRDGCDRRFSRSDELTRHIRIH), 404 to 426 (FQCRICMRAFSRSDHLTTHVRTH), and 432 to 454 (FSCDICGRKFARSDERKRHTKVH).

Belongs to the EGR C2H2-type zinc-finger protein family. As to expression, expressed in sheath cells and distal tip cells of the somatic gonad, as well as in the intestine and sperm (at protein level). Expression not observed in oocytes (at protein level).

It is found in the nucleus. Its subcellular location is the cytoplasm. The protein localises to the perinuclear region. Sequence-specific DNA-binding transcription factor. Plays a role in oocyte development, acting cell-autonomously in the somatic gonad. Involved in negative regulation of oocyte MAPK activation and inhibits oocyte maturation and ovulation. This chain is Early growth response factor homolog 1, found in Caenorhabditis elegans.